Reading from the N-terminus, the 151-residue chain is Ribosome maturation factor RimP (151 aa).

The protein belongs to the RimP family.

It localises to the cytoplasm. Required for maturation of 30S ribosomal subunits. In Shewanella oneidensis (strain ATCC 700550 / JCM 31522 / CIP 106686 / LMG 19005 / NCIMB 14063 / MR-1), this protein is Ribosome maturation factor RimP.